Here is a 415-residue protein sequence, read N- to C-terminus: Histidine--tRNA ligase (415 aa).

Belongs to the class-II aminoacyl-tRNA synthetase family. As to quaternary structure, homodimer.

The protein resides in the cytoplasm. The catalysed reaction is tRNA(His) + L-histidine + ATP = L-histidyl-tRNA(His) + AMP + diphosphate + H(+). This Clostridium botulinum (strain 657 / Type Ba4) protein is Histidine--tRNA ligase.